The following is an 825-amino-acid chain: Cytosolic phospholipase A2 delta (825 aa).

The region spanning 14–133 (SPERLHGHPY…LPGQLLQKTF (120 aa)) is the C2 domain. Ca(2+) contacts are provided by aspartate 47, aspartate 53, aspartate 103, aspartate 105, and aspartate 111. In terms of domain architecture, PLA2c spans 281 to 825 (DCCPKELSVR…SETRPLGVKT (545 aa)). 339–340 (GG) is a substrate binding site. Catalysis depends on serine 370, which acts as the Nucleophile. Aspartate 654 functions as the Proton acceptor in the catalytic mechanism.

The cofactor is Ca(2+). In terms of tissue distribution, weakly or not expressed in most tissues. Detected in placenta of 17.5 dpc embryos.

Its subcellular location is the cytoplasm. It localises to the cytosol. It is found in the membrane. The catalysed reaction is a 1,2-diacyl-sn-glycero-3-phosphocholine + H2O = a 1-acyl-sn-glycero-3-phosphocholine + a fatty acid + H(+). It carries out the reaction 1-hexadecanoyl-2-(5Z,8Z,11Z,14Z-eicosatetraenoyl)-sn-glycero-3-phosphocholine + H2O = 1-hexadecanoyl-sn-glycero-3-phosphocholine + (5Z,8Z,11Z,14Z)-eicosatetraenoate + H(+). The enzyme catalyses 1-hexadecanoyl-2-(9Z,12Z-octadecadienoyl)-sn-glycero-3-phosphocholine + H2O = (9Z,12Z)-octadecadienoate + 1-hexadecanoyl-sn-glycero-3-phosphocholine + H(+). It catalyses the reaction 1-hexadecanoyl-2-(9Z-octadecenoyl)-sn-glycero-3-phosphocholine + H2O = 1-hexadecanoyl-sn-glycero-3-phosphocholine + (9Z)-octadecenoate + H(+). The catalysed reaction is 1-hexadecanoyl-2-(5Z,8Z,11Z,14Z-eicosatetraenoyl)-sn-glycero-3-phosphoethanolamine + H2O = 1-hexadecanoyl-sn-glycero-3-phosphoethanolamine + (5Z,8Z,11Z,14Z)-eicosatetraenoate + H(+). It carries out the reaction 1-hexadecanoyl-2-(9Z,12Z-octadecadienoyl)-sn-glycero-3-phosphoethanolamine + H2O = 1-hexadecanoyl-sn-glycero-3-phosphoethanolamine + (9Z,12Z)-octadecadienoate + H(+). The enzyme catalyses 1-hexadecanoyl-sn-glycero-3-phosphocholine + H2O = sn-glycerol 3-phosphocholine + hexadecanoate + H(+). It functions in the pathway lipid metabolism; fatty acid metabolism. Stimulated by cytosolic Ca(2+). Functionally, calcium-dependent phospholipase A2 that selectively hydrolyzes glycerophospholipids in the sn-2 position. Compared to its human ortholog, may have no preference for the fatty acid found at the sn-2 position. This is Cytosolic phospholipase A2 delta from Mus musculus (Mouse).